A 171-amino-acid chain; its full sequence is Protein hunchback (171 aa).

2 disordered regions span residues 14 to 93 (PMSH…PMQI) and 124 to 171 (SNDK…KYMA). Positions 17 to 31 (HHHHHSHHSHGHHHS) are enriched in basic residues. Composition is skewed to low complexity over residues 32–42 (NSNSNASSPRQ) and 52–80 (SSSN…DTPL). Basic and acidic residues predominate over residues 152-171 (EPEKDHDLMSNSSEDMKYMA).

It belongs to the hunchback C2H2-type zinc-finger protein family.

Its subcellular location is the nucleus. Its function is as follows. Gap class segmentation protein that controls development of head structures. This chain is Protein hunchback (hb), found in Scaptomyza albovittata (Fruit fly).